The chain runs to 999 residues: Bifunctional glutamine synthetase adenylyltransferase/adenylyl-removing enzyme (999 aa).

The adenylyl removase stretch occupies residues 1–493 (MFVRKPATER…LHAKLFYQPL (493 aa)). The tract at residues 498-999 (GHTALGIGEG…KAVVRKIFGG (502 aa)) is adenylyl transferase.

This sequence belongs to the GlnE family. The cofactor is Mg(2+).

The catalysed reaction is [glutamine synthetase]-O(4)-(5'-adenylyl)-L-tyrosine + phosphate = [glutamine synthetase]-L-tyrosine + ADP. It catalyses the reaction [glutamine synthetase]-L-tyrosine + ATP = [glutamine synthetase]-O(4)-(5'-adenylyl)-L-tyrosine + diphosphate. Involved in the regulation of glutamine synthetase GlnA, a key enzyme in the process to assimilate ammonia. When cellular nitrogen levels are high, the C-terminal adenylyl transferase (AT) inactivates GlnA by covalent transfer of an adenylyl group from ATP to specific tyrosine residue of GlnA, thus reducing its activity. Conversely, when nitrogen levels are low, the N-terminal adenylyl removase (AR) activates GlnA by removing the adenylyl group by phosphorolysis, increasing its activity. The regulatory region of GlnE binds the signal transduction protein PII (GlnB) which indicates the nitrogen status of the cell. The sequence is that of Bifunctional glutamine synthetase adenylyltransferase/adenylyl-removing enzyme from Mycolicibacterium smegmatis (strain ATCC 700084 / mc(2)155) (Mycobacterium smegmatis).